A 1150-amino-acid chain; its full sequence is Protogenin (1150 aa).

A signal peptide spans methionine 1–cysteine 35. Ig-like domains follow at residues phenylalanine 36–alanine 130, serine 135–threonine 222, proline 235–threonine 322, and proline 327–threonine 411. Over phenylalanine 36–threonine 949 the chain is Extracellular. 4 cysteine pairs are disulfide-bonded: cysteine 60–cysteine 113, cysteine 156–cysteine 205, cysteine 256–cysteine 304, and cysteine 348–cysteine 395. N-linked (GlcNAc...) asparagine glycosylation occurs at asparagine 90. Fibronectin type-III domains follow at residues alanine 421–aspartate 515, proline 517–alanine 613, alanine 618–arginine 717, proline 724–glutamate 817, and proline 822–lysine 917. The N-linked (GlcNAc...) asparagine glycan is linked to asparagine 488. Residue asparagine 630 is glycosylated (N-linked (GlcNAc...) asparagine). The chain crosses the membrane as a helical span at residues glycine 950–isoleucine 970. Topologically, residues tyrosine 971–leucine 1150 are cytoplasmic. Disordered stretches follow at residues serine 981 to asparagine 1002 and isoleucine 1086 to leucine 1150. Composition is skewed to polar residues over residues threonine 983–serine 1000 and proline 1092–serine 1102. Over residues aspartate 1110–histidine 1138 the composition is skewed to basic and acidic residues. The span at serine 1141–leucine 1150 shows a compositional bias: polar residues.

Belongs to the immunoglobulin superfamily. DCC family.

The protein localises to the membrane. Functionally, may play a role in anteroposterior axis elongation. The sequence is that of Protogenin from Homo sapiens (Human).